Here is a 333-residue protein sequence, read N- to C-terminus: Mitochondrial fission regulator 1 (333 aa).

The transit peptide at 1-48 (MLGWIKRLIRMVFQQVGVSMQSVLWSRKPYGSSRSIVRKIGTNLSLIQ) directs the protein to the mitochondrion. Phosphoserine is present on Ser119. A coiled-coil region spans residues 137–169 (NEEALQKICALENELAALRAQIAKIVTQQEQQN). Disordered regions lie at residues 177 to 198 (STTF…PPPA) and 288 to 315 (SDSQ…FGPH). The segment at 179 to 304 (TFGTIPPHPP…EKGIPKSESE (126 aa)) is necessary and sufficient to promote mitochondrial fission. Residues 184-198 (PPHPPPPPPPLPPPA) are compositionally biased toward pro residues. Residues 288-307 (SDSQDEVEKGIPKSESEATS) show a composition bias toward basic and acidic residues.

Belongs to the MTFR1 family.

It localises to the mitochondrion. In terms of biological role, may play a role in mitochondrial aerobic respiration. May also regulate mitochondrial organization and fission. This is Mitochondrial fission regulator 1 (MTFR1) from Homo sapiens (Human).